We begin with the raw amino-acid sequence, 462 residues long: Ribosomal protein uS12 methylthiotransferase RimO (462 aa).

One can recognise an MTTase N-terminal domain in the interval 22–133 (ASVAFLHLGC…IIEVLQRVRQ (112 aa)). [4Fe-4S] cluster contacts are provided by cysteine 31, cysteine 67, cysteine 96, cysteine 171, cysteine 175, and cysteine 178. One can recognise a Radical SAM core domain in the interval 157 to 386 (TTGRFVSYLK…VAIQQPISAA (230 aa)). The region spanning 389–460 (QALIGQTVDV…LYDLTGEINH (72 aa)) is the TRAM domain.

The protein belongs to the methylthiotransferase family. RimO subfamily. Requires [4Fe-4S] cluster as cofactor.

It localises to the cytoplasm. It carries out the reaction L-aspartate(89)-[ribosomal protein uS12]-hydrogen + (sulfur carrier)-SH + AH2 + 2 S-adenosyl-L-methionine = 3-methylsulfanyl-L-aspartate(89)-[ribosomal protein uS12]-hydrogen + (sulfur carrier)-H + 5'-deoxyadenosine + L-methionine + A + S-adenosyl-L-homocysteine + 2 H(+). Catalyzes the methylthiolation of an aspartic acid residue of ribosomal protein uS12. The polypeptide is Ribosomal protein uS12 methylthiotransferase RimO (Prochlorococcus marinus (strain MIT 9211)).